Reading from the N-terminus, the 284-residue chain is 3-oxoadipate:acetyl-CoA acetyltransferase (284 aa).

Zn(2+) is bound by residues His-47, His-49, and Glu-229.

It belongs to the BKACE family. It depends on Zn(2+) as a cofactor.

It catalyses the reaction 3-oxoadipate + acetyl-CoA = acetoacetate + succinyl-CoA. In terms of biological role, catalyzes the condensation of 3-oxoadipate (beta-ketoadipate) and acetyl-CoA, forming acetoacetate and succinyl-CoA. Is likely involved is the degradation of 3-oxoadipate through an alternative pathway, within catechol degradation. In Cupriavidus necator (strain ATCC 17699 / DSM 428 / KCTC 22496 / NCIMB 10442 / H16 / Stanier 337) (Ralstonia eutropha), this protein is 3-oxoadipate:acetyl-CoA acetyltransferase.